The sequence spans 321 residues: UDP-N-acetylenolpyruvoylglucosamine reductase (321 aa).

One can recognise an FAD-binding PCMH-type domain in the interval 36-203; that stretch reads FRAGGLAEVM…TGALFEGYPE (168 aa). The active site involves arginine 183. Serine 232 serves as the catalytic Proton donor. The active site involves glutamate 302.

It belongs to the MurB family. FAD serves as cofactor.

It is found in the cytoplasm. It catalyses the reaction UDP-N-acetyl-alpha-D-muramate + NADP(+) = UDP-N-acetyl-3-O-(1-carboxyvinyl)-alpha-D-glucosamine + NADPH + H(+). It functions in the pathway cell wall biogenesis; peptidoglycan biosynthesis. Cell wall formation. The polypeptide is UDP-N-acetylenolpyruvoylglucosamine reductase (Agrobacterium fabrum (strain C58 / ATCC 33970) (Agrobacterium tumefaciens (strain C58))).